Consider the following 1009-residue polypeptide: MICAL-like protein 2 (1009 aa).

The Calponin-homology (CH) domain maps to 1–107 (MAAIKALQEW…YVSQYYNYFH (107 aa)). The segment at 1–260 (MAAIKALQEW…KSSNLASRKP (260 aa)) is forms an intramolecular interaction with the C-terminal coiled coil domain keeping the protein in a closed conformation. A phosphoserine mark is found at serine 110, serine 143, and serine 153. Disordered stretches follow at residues 114–180 (GMAG…PGTA), 247–268 (SVSP…ADTR), 348–447 (NSSP…TSKV), and 655–834 (SPSI…TSPV). Residues 144–171 (PAQTQRSPLSPARTNPVVQRNEGGSQRP) show a composition bias toward polar residues. Residues 186-248 (SICGVCGKHV…THHSSEVTSV (63 aa)) enclose the LIM zinc-binding domain. At serine 249 the chain carries Phosphoserine. The segment at 261-393 (GGVTADTRPF…QGQTASKGVK (133 aa)) is necessary and sufficient for interaction with actinins. A mediates targeting to the cell plasma membrane region spans residues 261–805 (GGVTADTRPF…EDGTRSCKEE (545 aa)). The segment covering 348–419 (NSSPIGWSSP…AWTSSASKTQ (72 aa)) has biased composition (polar residues). The segment covering 430–442 (PSAPAPASAPAPA) has biased composition (pro residues). The span at 694 to 730 (EGWRARLKPVDKKTPAGRSLEQKEPVLAEPRIGDTSR) shows a compositional bias: basic and acidic residues. 2 stretches are compositionally biased toward low complexity: residues 731–746 (KASS…TLTS) and 755–769 (PAGS…SPSP). Phosphoserine occurs at positions 766 and 768. Positions 791–817 (EPKKQEDGTRSCKEEKSPTRWSRERSA) are enriched in basic and acidic residues. The forms an intramolecular interaction with the N-terminal Calponin-homology and LIM zinc-binding domains-containing region keeping the protein in a closed conformation stretch occupies residues 806–913 (KSPTRWSRER…LMYKSKDQRL (108 aa)). Serine 832 carries the post-translational modification Phosphoserine. The region spanning 833 to 980 (PVRLHPDYIP…EQEEDQMLEN (148 aa)) is the bMERB domain. A coiled-coil region spans residues 841-880 (IPQEELQRQLQDIESQLDALELRGVELEKRLRAAEGDASE). The segment at 913-1009 (LEEQQLDLQG…WSSKSKSGQA (97 aa)) is mediates interaction with RAB13 and is required for transition from the closed to the open conformation.

As to quaternary structure, interacts with RAB13 (GTP-bound form); competes with RAB8A and is involved in tight junctions assembly. Interacts with RAB8A; competes with RAB13 and is involved in E-cadherin endocytic recycling. Interacts with RAB8B. Interacts (preferentially in opened conformation) with ACTN1 and ACTN4; stimulated by RAB13 activation. Interacts (via calponin-homology (CH) domain) with the filamins FLNA, FLNB and FLNC (via actin-binding domain). Detected in brain, lung, liver and kidney (at protein level).

It localises to the cell membrane. Its subcellular location is the cell junction. It is found in the tight junction. The protein resides in the recycling endosome. The protein localises to the cell projection. It localises to the neuron projection. Its subcellular location is the cytoplasm. It is found in the cytoskeleton. Its function is as follows. Effector of small Rab GTPases RAB8A and RAB13 which is involved in junctional complexes assembly through the regulation of cell adhesion molecules transport to the plasma membrane and actin cytoskeleton reorganization. Regulates the endocytic recycling of occludins, claudins and E-cadherin to the plasma membrane and may thereby regulate the establishment of tight junctions and adherens junctions. In parallel, may regulate actin cytoskeleton reorganization directly through interaction with F-actin or indirectly through actinins and filamins. Undergoes liquid-liquid phase separation to form tubular recycling endosomes. Plays 2 sequential roles in the biogenesis of tubular recycling endosomes: first organizes phase separation and then the closed form formed by interaction with RAB8A promotes endosomal tubulation. This chain is MICAL-like protein 2 (Micall2), found in Mus musculus (Mouse).